A 347-amino-acid chain; its full sequence is Probable replication factor C subunit 5 (347 aa).

Residue 64-71 participates in ATP binding; sequence GPPGTGKT.

It belongs to the activator 1 small subunits family. In terms of assembly, heteropentamer of various rfc subunits that forms a complex (RFC) with PCNA in the presence of ATP.

Its subcellular location is the nucleus. The elongation of primed DNA templates by DNA polymerase delta and epsilon requires the action of the accessory proteins PCNA and activator 1. The polypeptide is Probable replication factor C subunit 5 (rfc5) (Dictyostelium discoideum (Social amoeba)).